Consider the following 262-residue polypeptide: tRNA (guanine-N(1)-)-methyltransferase (262 aa).

Residues Gly-113 and 137-142 (IGDYVL) contribute to the S-adenosyl-L-methionine site.

Belongs to the RNA methyltransferase TrmD family. Homodimer.

It localises to the cytoplasm. The catalysed reaction is guanosine(37) in tRNA + S-adenosyl-L-methionine = N(1)-methylguanosine(37) in tRNA + S-adenosyl-L-homocysteine + H(+). In terms of biological role, specifically methylates guanosine-37 in various tRNAs. The chain is tRNA (guanine-N(1)-)-methyltransferase from Thermobifida fusca (strain YX).